Reading from the N-terminus, the 344-residue chain is Heat-inducible transcription repressor HrcA (344 aa).

Belongs to the HrcA family.

Negative regulator of class I heat shock genes (grpE-dnaK-dnaJ and groELS operons). Prevents heat-shock induction of these operons. The polypeptide is Heat-inducible transcription repressor HrcA (Corynebacterium aurimucosum (strain ATCC 700975 / DSM 44827 / CIP 107346 / CN-1) (Corynebacterium nigricans)).